The chain runs to 1131 residues: cGMP-specific 3',5'-cyclic phosphodiesterase (1131 aa).

Disordered stretches follow at residues 1–26 (MTDVSSPAGGAASPVEMATSSSSAAT) and 42–150 (GVAP…SQQD). Low complexity predominate over residues 42–63 (GVAPGAVPGPGSAAIPASSSSG). Polar residues predominate over residues 75–86 (SNNNRPAATNRS). The segment covering 110 to 136 (SSSTPSQSPSPSQSPSQASIQTQTSQQ) has biased composition (low complexity). 2 consecutive GAF domains span residues 255–412 (DIDV…GIGI) and 444–625 (NLEC…GLGI). Positions 655-978 (SQDQTEKLTQ…RNWQDLAEKV (324 aa)) constitute a PDEase domain. H731 (proton donor) is an active-site residue. Residues H735, H771, D772, and D882 each coordinate a divalent metal cation. 2 disordered regions span residues 1019–1048 (QQSQHGSEDSHTPEHQRSGSRLSMKKTGAL) and 1078–1131 (SHVS…CALL). Basic and acidic residues-rich tracts occupy residues 1024-1035 (GSEDSHTPEHQR) and 1078-1088 (SHVSEDMDDKS). Low complexity predominate over residues 1097–1117 (ASGSMGRMSASSSTSSAGGQM). A compositionally biased stretch (basic residues) spans 1121–1131 (SKKRSKLCALL). A Cysteine methyl ester modification is found at C1128. The S-farnesyl cysteine moiety is linked to residue C1128. Positions 1129-1131 (ALL) are cleaved as a propeptide — removed in mature form.

The protein belongs to the cyclic nucleotide phosphodiesterase family. In terms of assembly, interacts with PrBP. Requires a divalent metal cation as cofactor.

The protein resides in the cell membrane. The catalysed reaction is 3',5'-cyclic GMP + H2O = GMP + H(+). Its function is as follows. Has a role regulating cGMP transport in Malpighian tubule principal cells. The chain is cGMP-specific 3',5'-cyclic phosphodiesterase from Drosophila erecta (Fruit fly).